We begin with the raw amino-acid sequence, 458 residues long: Probable beta-eliminating lyase (458 aa).

Lysine 257 carries the post-translational modification N6-(pyridoxal phosphate)lysine.

This sequence belongs to the beta-eliminating lyase family. Pyridoxal 5'-phosphate is required as a cofactor.

This chain is Probable beta-eliminating lyase, found in Trichomonas vaginalis (strain ATCC PRA-98 / G3).